The chain runs to 153 residues: Proline-rich membrane anchor 1 (153 aa).

The signal sequence occupies residues 1-35 (MLLRDLVPRHGCCWPSLLLHCALHPLWGLVQVTHA). Residues 36 to 92 (EPQKSCSKVTDSCQHICQCRPPPPLPPPPPPPPPPRLLSAPAPNSTSCPAEDSWWSG) lie on the Extracellular side of the membrane. The region spanning 56–70 (PPPPLPPPPPPPPPP) is the PRAD domain. A compositionally biased stretch (pro residues) spans 59–71 (PLPPPPPPPPPPR). The segment at 59-79 (PLPPPPPPPPPPRLLSAPAPN) is disordered. Residue Asn-79 is glycosylated (N-linked (GlcNAc...) asparagine). A helical transmembrane segment spans residues 93-113 (LVIIVAVVCASLVFLTVLVII). The Cytoplasmic segment spans residues 114 to 153 (CYKAIKRKPLRKDENGTSVAEYPMSSSQSHKGVDVNAAVV). The segment at 129–153 (GTSVAEYPMSSSQSHKGVDVNAAVV) is disordered.

As to quaternary structure, interacts with ACHE, probably through disulfide bonds. As to expression, predominantly expressed in the central nervous system, including in the brain. Also expressed in muscle, heart and kidney. Isoform 1 may be predominant in the cortex and striatum, while isoform 2 is more abundant in the cerebellum.

It is found in the cell membrane. The protein resides in the cell junction. It localises to the synapse. In terms of biological role, required to anchor acetylcholinesterase (ACHE) to the basal lamina of the neuromuscular junction and to the membrane of neuronal synapses in brain. Also able to organize ACHE into tetramers. The sequence is that of Proline-rich membrane anchor 1 (Prima1) from Mus musculus (Mouse).